A 693-amino-acid chain; its full sequence is Elongation factor G (693 aa).

The 275-residue stretch at 8-282 folds into the tr-type G domain; that stretch reads EKTRNIGIMA…AVIDYLPSPL (275 aa). Residues 17 to 24, 81 to 85, and 135 to 138 each bind GTP; these read AHIDAGKT, DTPGH, and NKMD.

Belongs to the TRAFAC class translation factor GTPase superfamily. Classic translation factor GTPase family. EF-G/EF-2 subfamily.

It is found in the cytoplasm. Functionally, catalyzes the GTP-dependent ribosomal translocation step during translation elongation. During this step, the ribosome changes from the pre-translocational (PRE) to the post-translocational (POST) state as the newly formed A-site-bound peptidyl-tRNA and P-site-bound deacylated tRNA move to the P and E sites, respectively. Catalyzes the coordinated movement of the two tRNA molecules, the mRNA and conformational changes in the ribosome. This is Elongation factor G from Staphylococcus carnosus (strain TM300).